The chain runs to 70 residues: U2-agatoxin-Ao1r (70 aa).

The signal sequence occupies residues 1–20 (MRSIISLILISAMVFSMIAP). Positions 21 to 34 (VPEEERLQLSEDER) are excised as a propeptide. Disulfide bonds link Cys37-Cys53, Cys44-Cys58, and Cys52-Cys68. A Leucine amide modification is found at Leu69.

This sequence belongs to the neurotoxin 01 (U2-agtx) family. Expressed by the venom gland.

It is found in the secreted. Insect active toxin causing rapid but reversible paralysis in crickets. No activity shown in mammals. Does not show effect on mammalian voltage-gated calcium channels. The chain is U2-agatoxin-Ao1r from Agelena orientalis (Funnel-web spider).